The following is a 274-amino-acid chain: Urease accessory protein UreD (274 aa).

Belongs to the UreD family. As to quaternary structure, ureD, UreF and UreG form a complex that acts as a GTP-hydrolysis-dependent molecular chaperone, activating the urease apoprotein by helping to assemble the nickel containing metallocenter of UreC. The UreE protein probably delivers the nickel.

The protein localises to the cytoplasm. Its function is as follows. Required for maturation of urease via the functional incorporation of the urease nickel metallocenter. The chain is Urease accessory protein UreD from Enterobacter sp. (strain 638).